Consider the following 249-residue polypeptide: Orotidine 5'-phosphate decarboxylase (249 aa).

Residues D21, K43, D72–T81, T128, R193, Q204, G224, and R225 contribute to the substrate site. K74 acts as the Proton donor in catalysis.

It belongs to the OMP decarboxylase family. Type 1 subfamily. As to quaternary structure, homodimer.

The enzyme catalyses orotidine 5'-phosphate + H(+) = UMP + CO2. It functions in the pathway pyrimidine metabolism; UMP biosynthesis via de novo pathway; UMP from orotate: step 2/2. Its function is as follows. Catalyzes the decarboxylation of orotidine 5'-monophosphate (OMP) to uridine 5'-monophosphate (UMP). The sequence is that of Orotidine 5'-phosphate decarboxylase from Desulfosudis oleivorans (strain DSM 6200 / JCM 39069 / Hxd3) (Desulfococcus oleovorans).